Consider the following 70-residue polypeptide: SPbeta prophage-derived uncharacterized HTH-type transcriptional regulator YopO (70 aa).

One can recognise an HTH cro/C1-type domain in the interval 5-59 (IKQLMVKRGITIEELSRETMIDMQTLNKIIEMPDESDVTTIKLIALVLNVSIDEL). The segment at residues 16–35 (IEELSRETMIDMQTLNKIIE) is a DNA-binding region (H-T-H motif).

This is SPbeta prophage-derived uncharacterized HTH-type transcriptional regulator YopO (yopO) from Bacillus subtilis (strain 168).